A 130-amino-acid chain; its full sequence is Small ribosomal subunit protein uS8 (130 aa).

K88 bears the N6-succinyllysine mark.

It belongs to the universal ribosomal protein uS8 family. In terms of assembly, component of the small ribosomal subunit. Part of the small subunit (SSU) processome, composed of more than 70 proteins and the RNA chaperone small nucleolar RNA (snoRNA) U3.

The protein resides in the cytoplasm. Its subcellular location is the nucleus. The protein localises to the nucleolus. In terms of biological role, component of the small ribosomal subunit. The ribosome is a large ribonucleoprotein complex responsible for the synthesis of proteins in the cell. Part of the small subunit (SSU) processome, first precursor of the small eukaryotic ribosomal subunit. During the assembly of the SSU processome in the nucleolus, many ribosome biogenesis factors, an RNA chaperone and ribosomal proteins associate with the nascent pre-rRNA and work in concert to generate RNA folding, modifications, rearrangements and cleavage as well as targeted degradation of pre-ribosomal RNA by the RNA exosome. Required for proper erythropoiesis. This is Small ribosomal subunit protein uS8 (Rps15a) from Mus musculus (Mouse).